Here is a 100-residue protein sequence, read N- to C-terminus: Integration host factor subunit alpha (100 aa).

This sequence belongs to the bacterial histone-like protein family. Heterodimer of an alpha and a beta chain.

Functionally, this protein is one of the two subunits of integration host factor, a specific DNA-binding protein that functions in genetic recombination as well as in transcriptional and translational control. The protein is Integration host factor subunit alpha of Erythrobacter litoralis (strain HTCC2594).